Reading from the N-terminus, the 166-residue chain is 6,7-dimethyl-8-ribityllumazine synthase (166 aa).

5-amino-6-(D-ribitylamino)uracil is bound by residues Phe22, 56-58, and 80-82; these read SME and AVI. 85 to 86 is a (2S)-2-hydroxy-3-oxobutyl phosphate binding site; the sequence is ET. His88 acts as the Proton donor in catalysis. Phe113 is a 5-amino-6-(D-ribitylamino)uracil binding site. Arg127 contacts (2S)-2-hydroxy-3-oxobutyl phosphate.

This sequence belongs to the DMRL synthase family.

The catalysed reaction is (2S)-2-hydroxy-3-oxobutyl phosphate + 5-amino-6-(D-ribitylamino)uracil = 6,7-dimethyl-8-(1-D-ribityl)lumazine + phosphate + 2 H2O + H(+). Its pathway is cofactor biosynthesis; riboflavin biosynthesis; riboflavin from 2-hydroxy-3-oxobutyl phosphate and 5-amino-6-(D-ribitylamino)uracil: step 1/2. In terms of biological role, catalyzes the formation of 6,7-dimethyl-8-ribityllumazine by condensation of 5-amino-6-(D-ribitylamino)uracil with 3,4-dihydroxy-2-butanone 4-phosphate. This is the penultimate step in the biosynthesis of riboflavin. In Thermotoga neapolitana (strain ATCC 49049 / DSM 4359 / NBRC 107923 / NS-E), this protein is 6,7-dimethyl-8-ribityllumazine synthase.